The following is a 295-amino-acid chain: 5,10-methylenetetrahydrofolate reductase (295 aa).

Glu-28 (proton donor/acceptor) is an active-site residue. Thr-59 lines the NADH pocket. 12 residues coordinate FAD: His-89, Arg-119, Gly-120, Asp-121, Ala-133, Tyr-153, His-157, Ala-160, Asp-166, Asn-169, Arg-172, and Lys-173. A (6S)-5-methyl-5,6,7,8-tetrahydrofolate-binding site is contributed by Asp-121. Residue Gln-184 coordinates NADH. Gln-184, Gln-220, and Lys-280 together coordinate (6S)-5-methyl-5,6,7,8-tetrahydrofolate.

This sequence belongs to the methylenetetrahydrofolate reductase family. It depends on FAD as a cofactor.

It catalyses the reaction (6S)-5-methyl-5,6,7,8-tetrahydrofolate + NAD(+) = (6R)-5,10-methylene-5,6,7,8-tetrahydrofolate + NADH + H(+). The protein operates within one-carbon metabolism; tetrahydrofolate interconversion. It participates in amino-acid biosynthesis; L-methionine biosynthesis via de novo pathway. Functionally, catalyzes the NADH-dependent reduction of 5,10-methylenetetrahydrofolate to 5-methyltetrahydrofolate. Is required to provide the methyl group necessary for methionine synthetase to convert homocysteine to methionine; the methyl group is given by 5-methyltetrahydrofolate. This chain is 5,10-methylenetetrahydrofolate reductase (metF), found in Buchnera aphidicola subsp. Baizongia pistaciae (strain Bp).